The following is a 112-amino-acid chain: UPF0342 protein SGO_1370 (112 aa).

The protein belongs to the UPF0342 family.

This is UPF0342 protein SGO_1370 from Streptococcus gordonii (strain Challis / ATCC 35105 / BCRC 15272 / CH1 / DL1 / V288).